Here is a 315-residue protein sequence, read N- to C-terminus: Ribosomal RNA small subunit methyltransferase H (315 aa).

Residues 36–38 (GGH), Asp56, Phe80, Asp102, and Gln109 contribute to the S-adenosyl-L-methionine site.

The protein belongs to the methyltransferase superfamily. RsmH family.

Its subcellular location is the cytoplasm. The catalysed reaction is cytidine(1402) in 16S rRNA + S-adenosyl-L-methionine = N(4)-methylcytidine(1402) in 16S rRNA + S-adenosyl-L-homocysteine + H(+). In terms of biological role, specifically methylates the N4 position of cytidine in position 1402 (C1402) of 16S rRNA. The protein is Ribosomal RNA small subunit methyltransferase H of Proteus mirabilis (strain HI4320).